A 283-amino-acid polypeptide reads, in one-letter code: Acyl-coenzyme A diphosphatase FITM2 (283 aa).

Low complexity predominate over residues 1–11; that stretch reads MSTRRSSTRAD. The interval 1 to 21 is disordered; it reads MSTRRSSTRADSTTKRPASPN. At 1-39 the chain is on the cytoplasmic side; that stretch reads MSTRRSSTRADSTTKRPASPNSTPNAALGIFVAIARQIL. Residues 40 to 60 form a helical membrane-spanning segment; the sequence is FIDARKVALFYLAFVTVLSFI. The Lumenal segment spans residues 61–81; the sequence is ESRIELDSTYYLVQKHSVLNQ. Residues 82–102 form a helical membrane-spanning segment; the sequence is YGVKMGWFWTLVIVGPFIWFS. Topologically, residues 103–120 are cytoplasmic; sequence SKAHNRRDRDQPIVDVCR. The chain crosses the membrane as a helical span at residues 121-141; it reads LGVGTACWYFSVQFFHKVLAL. Topologically, residues 142 to 168 are lumenal; it reads TSMCDKGRTLTRAQCSEKEGVWTPGYD. Residues 169-189 form a helical membrane-spanning segment; sequence ISGHCFLMIYSILIITEEAIA. The active site involves His172. Residues 190 to 219 lie on the Cytoplasmic side of the membrane; it reads YRHYQQVTDAVHQMDGDREEHDRLTRCIQY. The next 2 membrane-spanning stretches (helical) occupy residues 220–240 and 241–261; these read FFVA…ISVL and YYHI…CWFV. His243 is a catalytic residue. Residues 262–283 are Cytoplasmic-facing; it reads TYRMLYPAGFLASPIRRTVGRK.

This sequence belongs to the FIT family. FIT2 subfamily.

It localises to the endoplasmic reticulum membrane. The enzyme catalyses an acyl-CoA + H2O = an acyl-4'-phosphopantetheine + adenosine 3',5'-bisphosphate + 2 H(+). In terms of biological role, fatty acyl-coenzyme A (CoA) diphosphatase that hydrolyzes fatty acyl-CoA to yield acyl-4'-phosphopantetheine and adenosine 3',5'-bisphosphate. Preferentially hydrolyzes unsaturated long-chain acyl-CoA substrates in the endoplasmic reticulum (ER) lumen. This catalytic activity is required for maintaining ER structure and for lipid droplets (LDs) biogenesis, which are lipid storage organelles involved in maintaining lipid and energy homeostasis. May directly bind to diacylglycerol (DAGs) and triacylglycerol, which is also important for LD biogenesis. May support directional budding of nacent LDs from the ER into the cytosol by reducing DAG levels at sites of LD formation. May play a role in the regulation of cell morphology, ER morphology and cytoskeletal organization. The protein is Acyl-coenzyme A diphosphatase FITM2 of Caenorhabditis elegans.